We begin with the raw amino-acid sequence, 1431 residues long: Caskin-1 (1431 aa).

6 ANK repeats span residues 48 to 77 (DGFS…AVDI), 81 to 110 (KGMR…AVNV), 114 to 143 (EGHI…NPCM), 147 to 176 (SGKT…CAAL), 188 to 217 (NGTS…DINR), and 220 to 249 (KSGT…NAQV). At Y253 the chain carries Phosphotyrosine. An SH3 domain is found at 281–347 (SAALQVRATK…PSSLGEAIVK (67 aa)). The interval 348–372 (RAGSRTGSEPSPPQGGGSLGPSAPP) is disordered. Phosphoserine is present on S358. The tract at residues 375 to 471 (IWVLRKPFAG…PKKLESASAS (97 aa)) is CASK-binding. Residue R398 is modified to Omega-N-methylarginine. The span at 420–430 (SQKSVSESSPG) shows a compositional bias: polar residues. The interval 420–471 (SQKSVSESSPGDSPVKPPEGSSGAARSQPPAAHAGQVYGEQPPKKLESASAS) is disordered. Phosphoserine occurs at positions 423 and 432. 2 consecutive SAM domains span residues 476-539 (KSAE…LNIP) and 545-609 (HKPA…LAEL). Phosphoserine is present on residues S637 and S650. Residues 669 to 679 (LSGPAEAGAAA) show a composition bias toward low complexity. 2 disordered regions span residues 669–1000 (LSGP…TGSA) and 1016–1041 (GGGG…EPGR). Polar residues predominate over residues 692–712 (RTTSRESSLSGRARHISSSQE). S723 and S728 each carry phosphoserine. T741 is modified (phosphothreonine). Phosphoserine is present on S791. Pro residues predominate over residues 848–860 (PPAPGPAPPPVPA). 3 positions are modified to phosphoserine: S891, S893, and S989. A compositionally biased stretch (pro residues) spans 1028–1037 (GHPTPRPASP). The residue at position 1067 (T1067) is a Phosphothreonine. Position 1069 is a phosphoserine (S1069). 2 disordered regions span residues 1072–1372 (VTGL…RQKL) and 1389–1410 (KIRQ…STGS). A compositionally biased stretch (basic and acidic residues) spans 1148-1160 (DTVKRRPKAKEPD). Residues 1191 to 1215 (PELPPPPPPAEPPPADLMQLPPLPL) show a composition bias toward pro residues. The segment covering 1236-1247 (QPVSKIQGSPTP) has biased composition (polar residues). S1259 is subject to Phosphoserine. T1268 is modified (phosphothreonine). A compositionally biased stretch (pro residues) spans 1268-1283 (TPPPVSPKPPPPPTAP). Low complexity-rich tracts occupy residues 1284–1299 (KPAK…SATP), 1309–1327 (PPAA…SASP), and 1345–1359 (PRAA…PVAS). S1363 carries the phosphoserine modification. Over residues 1389-1407 (KIRQEDGQGPRPSSIEEKS) the composition is skewed to basic and acidic residues.

In terms of assembly, binds the CaM kinase domain of CASK. Forms a ternary complex with CASK and LIN7A, LIN7B or LIN7C. Competes with APBA1 that forms a similar complex with CASK and LIN7 proteins. The tripartite complex CASKIN1/CASK/LIN7(A/B/C) binds the cytoplasmic tail of NRXN1. Polymerizes, via the tandem SAM domains, to form long, 8 nM wide fibers, upon which other proteins can assemble.

The protein resides in the cytoplasm. Functionally, may link the scaffolding protein CASK to downstream intracellular effectors. The polypeptide is Caskin-1 (Caskin1) (Mus musculus (Mouse)).